Consider the following 436-residue polypeptide: 3-ketoacyl-CoA thiolase (436 aa).

Catalysis depends on Cys-99, which acts as the Acyl-thioester intermediate. Catalysis depends on proton acceptor residues His-392 and Cys-422.

The protein belongs to the thiolase-like superfamily. Thiolase family. In terms of assembly, heterotetramer of two alpha chains (FadJ) and two beta chains (FadI).

It is found in the cytoplasm. The enzyme catalyses an acyl-CoA + acetyl-CoA = a 3-oxoacyl-CoA + CoA. It functions in the pathway lipid metabolism; fatty acid beta-oxidation. In terms of biological role, catalyzes the final step of fatty acid oxidation in which acetyl-CoA is released and the CoA ester of a fatty acid two carbons shorter is formed. The polypeptide is 3-ketoacyl-CoA thiolase (Photorhabdus laumondii subsp. laumondii (strain DSM 15139 / CIP 105565 / TT01) (Photorhabdus luminescens subsp. laumondii)).